Reading from the N-terminus, the 265-residue chain is 4-hydroxy-tetrahydrodipicolinate reductase (265 aa).

Residues 7-12 and D33 each bind NAD(+); that span reads GASGRM. An NADP(+)-binding site is contributed by R34. NAD(+)-binding positions include 96 to 98 and 120 to 123; these read GTT and AANM. H153 serves as the catalytic Proton donor/acceptor. A (S)-2,3,4,5-tetrahydrodipicolinate-binding site is contributed by H154. The active-site Proton donor is the K157. Residue 163 to 164 coordinates (S)-2,3,4,5-tetrahydrodipicolinate; it reads GT.

It belongs to the DapB family.

It localises to the cytoplasm. It catalyses the reaction (S)-2,3,4,5-tetrahydrodipicolinate + NAD(+) + H2O = (2S,4S)-4-hydroxy-2,3,4,5-tetrahydrodipicolinate + NADH + H(+). The catalysed reaction is (S)-2,3,4,5-tetrahydrodipicolinate + NADP(+) + H2O = (2S,4S)-4-hydroxy-2,3,4,5-tetrahydrodipicolinate + NADPH + H(+). Its pathway is amino-acid biosynthesis; L-lysine biosynthesis via DAP pathway; (S)-tetrahydrodipicolinate from L-aspartate: step 4/4. Catalyzes the conversion of 4-hydroxy-tetrahydrodipicolinate (HTPA) to tetrahydrodipicolinate. In Burkholderia ambifaria (strain ATCC BAA-244 / DSM 16087 / CCUG 44356 / LMG 19182 / AMMD) (Burkholderia cepacia (strain AMMD)), this protein is 4-hydroxy-tetrahydrodipicolinate reductase.